The following is a 351-amino-acid chain: Putative F-box protein At5g52610 (351 aa).

Residues 1–41 (MISEDLLVEILLRLPVKPLARCLCVCKLWATIIRSRYFINL) form the F-box domain.

This chain is Putative F-box protein At5g52610, found in Arabidopsis thaliana (Mouse-ear cress).